A 210-amino-acid chain; its full sequence is Large ribosomal subunit protein uL3 (210 aa).

Residues 123 to 144 (KRHGQSRGPMAHGSRYHRRPGS) form a disordered region.

The protein belongs to the universal ribosomal protein uL3 family. In terms of assembly, part of the 50S ribosomal subunit. Forms a cluster with proteins L14 and L19.

Functionally, one of the primary rRNA binding proteins, it binds directly near the 3'-end of the 23S rRNA, where it nucleates assembly of the 50S subunit. The chain is Large ribosomal subunit protein uL3 from Alkaliphilus metalliredigens (strain QYMF).